A 235-amino-acid polypeptide reads, in one-letter code: Ribonuclease 3 (235 aa).

Positions 7–134 constitute an RNase III domain; sequence LKDLQNKIEI…LIASIYLDKG (128 aa). E47 is a Mg(2+) binding site. Residue D51 is part of the active site. Mg(2+)-binding residues include D120 and E123. Residue E123 is part of the active site. The region spanning 161–230 is the DRBM domain; that stretch reads DYKTKLQEII…AKKAIENMEV (70 aa).

The protein belongs to the ribonuclease III family. In terms of assembly, homodimer. Requires Mg(2+) as cofactor.

It localises to the cytoplasm. It catalyses the reaction Endonucleolytic cleavage to 5'-phosphomonoester.. Functionally, digests double-stranded RNA. Involved in the processing of primary rRNA transcript to yield the immediate precursors to the large and small rRNAs (23S and 16S). Processes some mRNAs, and tRNAs when they are encoded in the rRNA operon. Processes pre-crRNA and tracrRNA of type II CRISPR loci if present in the organism. This is Ribonuclease 3 from Clostridium tetani (strain Massachusetts / E88).